The primary structure comprises 429 residues: Putative GMP synthase [glutamine-hydrolyzing] (429 aa).

Residues 10–118 (TIFILDFGSQ…GYTPIHLYPC (109 aa)) form the Glutamine amidotransferase type-1 domain. Catalysis depends on Cys87, which acts as the Nucleophile. The GMPS ATP-PPase domain occupies 119–304 (ELFKHIVDCE…LGLSSYLLDR (186 aa)). Catalysis depends on residues His176 and Glu178.

Homodimer.

It catalyses the reaction XMP + L-glutamine + ATP + H2O = GMP + L-glutamate + AMP + diphosphate + 2 H(+). Its pathway is purine metabolism; GMP biosynthesis; GMP from XMP (L-Gln route): step 1/1. Functionally, catalyzes the synthesis of GMP from XMP. In Chlamydia pneumoniae (Chlamydophila pneumoniae), this protein is Putative GMP synthase [glutamine-hydrolyzing] (guaA).